Consider the following 212-residue polypeptide: Pyrrolidone-carboxylate peptidase (212 aa).

Residues E80, C143, and H165 contribute to the active site.

This sequence belongs to the peptidase C15 family. In terms of assembly, homotetramer.

It localises to the cytoplasm. It catalyses the reaction Release of an N-terminal pyroglutamyl group from a polypeptide, the second amino acid generally not being Pro.. In terms of biological role, removes 5-oxoproline from various penultimate amino acid residues except L-proline. The sequence is that of Pyrrolidone-carboxylate peptidase from Vibrio parahaemolyticus serotype O3:K6 (strain RIMD 2210633).